A 150-amino-acid polypeptide reads, in one-letter code: Transcriptional repressor NrdR (150 aa).

A zinc finger spans residues Cys3–Cys34. The ATP-cone domain occupies Pro49 to Glu139.

Belongs to the NrdR family. Zn(2+) serves as cofactor.

Its function is as follows. Negatively regulates transcription of bacterial ribonucleotide reductase nrd genes and operons by binding to NrdR-boxes. The polypeptide is Transcriptional repressor NrdR (Geotalea uraniireducens (strain Rf4) (Geobacter uraniireducens)).